A 419-amino-acid polypeptide reads, in one-letter code: DNA primase DnaG (419 aa).

The 77-residue stretch at 168-244 (DTIIVVEGRS…KVDYVARAPE (77 aa)) folds into the Toprim domain. Positions 174, 218, and 220 each coordinate Mg(2+). 2 stretches are compositionally biased toward basic and acidic residues: residues 280 to 291 (KPAEEAVKREEE) and 306 to 316 (KAAKPPEEKPP). Residues 280-317 (KPAEEAVKREEEAAAEAKPPAPAVQEKAAKPPEEKPPT) form a disordered region.

The protein belongs to the archaeal DnaG primase family. In terms of assembly, forms a ternary complex with MCM helicase and DNA. Component of the archaeal exosome complex. Mg(2+) serves as cofactor.

It catalyses the reaction ssDNA + n NTP = ssDNA/pppN(pN)n-1 hybrid + (n-1) diphosphate.. In terms of biological role, RNA polymerase that catalyzes the synthesis of short RNA molecules used as primers for DNA polymerase during DNA replication. Also part of the exosome, which is a complex involved in RNA degradation. Acts as a poly(A)-binding protein that enhances the interaction between heteromeric, adenine-rich transcripts and the exosome. This is DNA primase DnaG from Aeropyrum pernix (strain ATCC 700893 / DSM 11879 / JCM 9820 / NBRC 100138 / K1).